The sequence spans 427 residues: Gamma-glutamyl phosphate reductase (427 aa).

The protein belongs to the gamma-glutamyl phosphate reductase family.

The protein resides in the cytoplasm. The enzyme catalyses L-glutamate 5-semialdehyde + phosphate + NADP(+) = L-glutamyl 5-phosphate + NADPH + H(+). It participates in amino-acid biosynthesis; L-proline biosynthesis; L-glutamate 5-semialdehyde from L-glutamate: step 2/2. Functionally, catalyzes the NADPH-dependent reduction of L-glutamate 5-phosphate into L-glutamate 5-semialdehyde and phosphate. The product spontaneously undergoes cyclization to form 1-pyrroline-5-carboxylate. The polypeptide is Gamma-glutamyl phosphate reductase (Brucella anthropi (strain ATCC 49188 / DSM 6882 / CCUG 24695 / JCM 21032 / LMG 3331 / NBRC 15819 / NCTC 12168 / Alc 37) (Ochrobactrum anthropi)).